Reading from the N-terminus, the 428-residue chain is Adenylosuccinate synthetase (428 aa).

Residues 12-18 (GDEGKGK) and 40-42 (GHT) each bind GTP. Residue D13 is the Proton acceptor of the active site. D13 and G40 together coordinate Mg(2+). IMP contacts are provided by residues 13 to 16 (DEGK), 38 to 41 (NAGH), T130, R144, Q225, T240, and R304. H41 acts as the Proton donor in catalysis. 300–306 (ATTGRPR) provides a ligand contact to substrate. GTP is bound by residues R306, 332-334 (KLD), and 415-417 (SVG).

Belongs to the adenylosuccinate synthetase family. Homodimer. Mg(2+) is required as a cofactor.

The protein localises to the cytoplasm. It catalyses the reaction IMP + L-aspartate + GTP = N(6)-(1,2-dicarboxyethyl)-AMP + GDP + phosphate + 2 H(+). It participates in purine metabolism; AMP biosynthesis via de novo pathway; AMP from IMP: step 1/2. Functionally, plays an important role in the de novo pathway of purine nucleotide biosynthesis. Catalyzes the first committed step in the biosynthesis of AMP from IMP. This is Adenylosuccinate synthetase from Lawsonia intracellularis (strain PHE/MN1-00).